Reading from the N-terminus, the 1178-residue chain is Pesticidal crystal protein Cry1Ac (1178 aa).

Belongs to the delta endotoxin family.

Promotes colloidosmotic lysis by binding to the midgut epithelial cells of many lepidopteran larvae. The sequence is that of Pesticidal crystal protein Cry1Ac (cry1Ac) from Bacillus thuringiensis subsp. kurstaki.